We begin with the raw amino-acid sequence, 85 residues long: RNA-binding protein KhpA (85 aa).

Residues 32 to 85 (YLEYNLTVNPEDIGRVIGRQGRVASAIRTIVYSVRVSGPKRVRLTIEDGQQKNS) enclose the KH domain.

The protein belongs to the KhpA RNA-binding protein family. As to quaternary structure, forms a complex with KhpB.

It is found in the cytoplasm. A probable RNA chaperone. Forms a complex with KhpB which binds to cellular RNA and controls its expression. Plays a role in peptidoglycan (PG) homeostasis and cell length regulation. In terms of biological role, necessary for correct cell elongation. The chain is RNA-binding protein KhpA from Lactiplantibacillus plantarum (strain ATCC BAA-793 / NCIMB 8826 / WCFS1) (Lactobacillus plantarum).